The primary structure comprises 475 residues: uncharacterized protein (475 aa).

The helical transmembrane segment at 19 to 39 threads the bilayer; it reads LVSAILILSILIWLIITIFFA.

It localises to the membrane. This is an uncharacterized protein from Mycoplasma pneumoniae (strain ATCC 29342 / M129 / Subtype 1) (Mycoplasmoides pneumoniae).